A 227-amino-acid chain; its full sequence is Probable proteasome subunit beta type-2 (227 aa).

The propeptide at 1-6 (MITKTG) is removed in mature form. The Nucleophile role is filled by Thr7.

The protein belongs to the peptidase T1B family. As to quaternary structure, the 26S proteasome consists of a 20S proteasome core and two 19S regulatory subunits. The 20S proteasome core is composed of 28 subunits that are arranged in four stacked rings, resulting in a barrel-shaped structure. The two end rings are each formed by seven alpha subunits, and the two central rings are each formed by seven beta subunits. The catalytic chamber with the active sites is on the inside of the barrel.

The protein resides in the cytoplasm. The protein localises to the nucleus. The catalysed reaction is Cleavage of peptide bonds with very broad specificity.. In terms of biological role, the proteasome degrades poly-ubiquitinated proteins in the cytoplasm and in the nucleus. It is essential for the regulated turnover of proteins and for the removal of misfolded proteins. The proteasome is a multicatalytic proteinase complex that is characterized by its ability to cleave peptides with Arg, Phe, Tyr, Leu, and Glu adjacent to the leaving group at neutral or slightly basic pH. It has an ATP-dependent proteolytic activity. This is Probable proteasome subunit beta type-2 (PUP1) from Encephalitozoon cuniculi (strain GB-M1) (Microsporidian parasite).